The following is a 324-amino-acid chain: Probable 6-phosphogluconolactonase 4, chloroplastic (324 aa).

The transit peptide at 1–63 directs the protein to the chloroplast; the sequence is MSVSAAVAAA…PAMATDGAAA (63 aa). Positions 19–43 are disordered; sequence ARHRSPPASRVAATSRGRPFSSGPH.

This sequence belongs to the glucosamine/galactosamine-6-phosphate isomerase family. 6-phosphogluconolactonase subfamily.

Its subcellular location is the plastid. It is found in the chloroplast. It catalyses the reaction 6-phospho-D-glucono-1,5-lactone + H2O = 6-phospho-D-gluconate + H(+). It functions in the pathway carbohydrate degradation; pentose phosphate pathway; D-ribulose 5-phosphate from D-glucose 6-phosphate (oxidative stage): step 2/3. Hydrolysis of 6-phosphogluconolactone to 6-phosphogluconate. The polypeptide is Probable 6-phosphogluconolactonase 4, chloroplastic (Oryza sativa subsp. japonica (Rice)).